The following is a 670-amino-acid chain: UvrABC system protein B (670 aa).

One can recognise a Helicase ATP-binding domain in the interval 51 to 433 (DGLKKGEPFQ…SSRVVEQIIR (383 aa)). An ATP-binding site is contributed by 64-71 (GVTGSGKT). Positions 117–140 (YYDYYQPESYLPAKDQYIEKDAMI) match the Beta-hairpin motif. The region spanning 453-612 (DVMQEIRKIV…IVPTTIRKPI (160 aa)) is the Helicase C-terminal domain. One can recognise a UVR domain in the interval 631–666 (PNVIIELDAEMREAADRLDFERAIQVRELIKKLEKE).

The protein belongs to the UvrB family. In terms of assembly, forms a heterotetramer with UvrA during the search for lesions. Interacts with UvrC in an incision complex.

The protein resides in the cytoplasm. Its function is as follows. The UvrABC repair system catalyzes the recognition and processing of DNA lesions. A damage recognition complex composed of 2 UvrA and 2 UvrB subunits scans DNA for abnormalities. Upon binding of the UvrA(2)B(2) complex to a putative damaged site, the DNA wraps around one UvrB monomer. DNA wrap is dependent on ATP binding by UvrB and probably causes local melting of the DNA helix, facilitating insertion of UvrB beta-hairpin between the DNA strands. Then UvrB probes one DNA strand for the presence of a lesion. If a lesion is found the UvrA subunits dissociate and the UvrB-DNA preincision complex is formed. This complex is subsequently bound by UvrC and the second UvrB is released. If no lesion is found, the DNA wraps around the other UvrB subunit that will check the other stand for damage. This Methanosarcina mazei (strain ATCC BAA-159 / DSM 3647 / Goe1 / Go1 / JCM 11833 / OCM 88) (Methanosarcina frisia) protein is UvrABC system protein B.